Here is a 699-residue protein sequence, read N- to C-terminus: Glycine--tRNA ligase beta subunit (699 aa).

This sequence belongs to the class-II aminoacyl-tRNA synthetase family. As to quaternary structure, tetramer of two alpha and two beta subunits.

It is found in the cytoplasm. It carries out the reaction tRNA(Gly) + glycine + ATP = glycyl-tRNA(Gly) + AMP + diphosphate. In Methylobacterium radiotolerans (strain ATCC 27329 / DSM 1819 / JCM 2831 / NBRC 15690 / NCIMB 10815 / 0-1), this protein is Glycine--tRNA ligase beta subunit.